We begin with the raw amino-acid sequence, 625 residues long: MPAVLRTRSKESSIEQKPASRTRTRSRRGKRGRDDDDDDDDEESDDAYDEVGNDYDEYASRAKLATNRPFEIVAGLPASVELPNYNSSLTHPQSIKNSGVLYDSLVSSRRTWVQGEMFELYWRRPKKIVSESTPAATESPTSGTIPLIRDKMQKMCDCVMSGGPHTFKVRLFILKNDKIEQKWQDEQELKKKEKELKRKNDAEAKRLRMEERKRQQMQKKIAKEQKLQLQKENKAKQKLEQEALKLKRKEEMKKLKEQNKNKQGSPSSSMHDPRMIMNLNLMAQEDPKLNTLMETVAKGLANNSQLEEFKKFIEIAKKRSLEENPVNKRPSVTTTRPAPPSKAKDVAEDHRLNSITLVKSSKTAATEPEPKKADDENAEKQQSKEAKTTAESTQVDVKKEEEDVKEKGVKSEDTQKKEDNQVVPKRKRRKNAIKEDKDMQLTAFQQKYVQGAEIILEYLEFTHSRYYLPKKSVVEFLEDTDEIIISWIVIHNSKEIEKFKTKKIKAKLKADQKLNKEDAKPGSDVEKEVSFNPLFEADCPTPLYTPMTMKLSGIHKRFNQIIRNSVSPMEEVVKEMEKILQIGTRLSGYNLWYQLDGYDDEALSESLRFELNEWEHAMRSRRHKR.

4 disordered regions span residues 1–53 (MPAV…EVGN), 194–234 (KELK…KENK), 254–273 (KLKE…MHDP), and 324–434 (NPVN…NAIK). A compositionally biased stretch (basic residues) spans 20-31 (SRTRTRSRRGKR). Positions 35 to 53 (DDDDDDDEESDDAYDEVGN) are enriched in acidic residues. Basic and acidic residues-rich tracts occupy residues 194 to 214 (KELK…ERKR) and 221 to 234 (IAKE…KENK). Residues 261 to 270 (NKQGSPSSSM) show a composition bias toward polar residues. The segment covering 342–352 (KAKDVAEDHRL) has biased composition (basic and acidic residues). The segment covering 353-364 (NSITLVKSSKTA) has biased composition (polar residues). Composition is skewed to basic and acidic residues over residues 368-388 (PEPK…EAKT) and 396-420 (DVKK…KEDN).

This sequence belongs to the SWC3 family. Component of the SWR1 chromatin remodeling complex composed of at least ACT1, ARP4, RVB1, RVB2, ARP6, YAF9, VPS71, VPS72, SWC3, SWC4, SWC5, SWC7 and SWR1, and perhaps BDF1.

It is found in the nucleus. Functionally, component of the SWR1 complex which mediates the ATP-dependent exchange of histone H2A for the H2A variant HZT1 leading to transcriptional regulation of selected genes by chromatin remodeling. Involved in chromosome stability. This Saccharomyces cerevisiae (strain ATCC 204508 / S288c) (Baker's yeast) protein is SWR1-complex protein 3 (SWC3).